A 426-amino-acid polypeptide reads, in one-letter code: Adenylosuccinate synthetase (426 aa).

GTP is bound by residues glycine 13–lysine 19 and glycine 41–threonine 43. Catalysis depends on aspartate 14, which acts as the Proton acceptor. Aspartate 14 and glycine 41 together coordinate Mg(2+). Residues aspartate 14–lysine 17, asparagine 39–histidine 42, threonine 129, arginine 143, glutamine 224, threonine 239, and arginine 303 contribute to the IMP site. The active-site Proton donor is histidine 42. Position 299–305 (threonine 299–arginine 305) interacts with substrate. Residues arginine 305, lysine 331–aspartate 333, and glycine 414–glycine 416 each bind GTP.

This sequence belongs to the adenylosuccinate synthetase family. Homodimer. It depends on Mg(2+) as a cofactor.

The protein resides in the cytoplasm. It carries out the reaction IMP + L-aspartate + GTP = N(6)-(1,2-dicarboxyethyl)-AMP + GDP + phosphate + 2 H(+). It participates in purine metabolism; AMP biosynthesis via de novo pathway; AMP from IMP: step 1/2. Its function is as follows. Plays an important role in the de novo pathway of purine nucleotide biosynthesis. Catalyzes the first committed step in the biosynthesis of AMP from IMP. In Caldicellulosiruptor bescii (strain ATCC BAA-1888 / DSM 6725 / KCTC 15123 / Z-1320) (Anaerocellum thermophilum), this protein is Adenylosuccinate synthetase.